A 158-amino-acid polypeptide reads, in one-letter code: Phosphopantetheine adenylyltransferase (158 aa).

Thr-10 is a substrate binding site. Residues 10–11 (TF) and His-18 contribute to the ATP site. Substrate is bound by residues Lys-42, Leu-74, and Arg-88. ATP contacts are provided by residues 89 to 91 (GLR), Glu-99, and 124 to 130 (NSFISST).

The protein belongs to the bacterial CoaD family. Homohexamer. Mg(2+) is required as a cofactor.

It is found in the cytoplasm. The catalysed reaction is (R)-4'-phosphopantetheine + ATP + H(+) = 3'-dephospho-CoA + diphosphate. It functions in the pathway cofactor biosynthesis; coenzyme A biosynthesis; CoA from (R)-pantothenate: step 4/5. In terms of biological role, reversibly transfers an adenylyl group from ATP to 4'-phosphopantetheine, yielding dephospho-CoA (dPCoA) and pyrophosphate. This Shewanella loihica (strain ATCC BAA-1088 / PV-4) protein is Phosphopantetheine adenylyltransferase.